A 391-amino-acid polypeptide reads, in one-letter code: MRCDVVVVGAGPGGSMAAKTAAEKGLKVVLVEKRQEIGDPVRCAEGVSKARLSSMIKPDPKWIASEVKGARLYAPDGSNVVMSEDKSGDEVGYVLERKIFDRALAMDAARAGARVMVKTRALDLLRANGSVKGIRAMRYGEIIDIEADVVIGADGVESKVGRWAGIDTALKPGDIEVCAQFLLYDKGIDDEYCEFFLGNELAPGGYVWSFPKGEHLANVGLGVIGSRSEPGAPVKLLRRFVERRMPEARIVEMVVGGVPVSGPIERTIADGVMLVGDAARQSDPITGGGILNAMQAGMIAGEVVADAVSSGDTGVEGLMAYEKRWRESIGKQIARHLDLKEFFIRLSDDDLNKLMHSIQSEDVSKMDLRGMLRVLIRLNPKMLWELRHLVM.

FAD contacts are provided by G13, E32, C43, A44, G46, R97, A121, D277, G289, and I290.

It belongs to the geranylgeranyl reductase family. DGGGPL reductase subfamily. Requires FAD as cofactor.

It carries out the reaction a 2,3-bis-O-phytanyl-sn-glycerol 1-phospholipid + 8 oxidized 2[4Fe-4S]-[ferredoxin] = a 2,3-bis-O-(geranylgeranyl)-sn-glycerol 1-phospholipid + 8 reduced 2[4Fe-4S]-[ferredoxin] + 16 H(+). The catalysed reaction is 2,3-bis-O-(phytanyl)-sn-glycerol 1-phosphate + 8 oxidized 2[4Fe-4S]-[ferredoxin] = 2,3-bis-O-(geranylgeranyl)-sn-glycerol 1-phosphate + 8 reduced 2[4Fe-4S]-[ferredoxin] + 16 H(+). It catalyses the reaction a 2,3-bis-O-phytanyl-sn-glycerol 1-phospholipid + 8 A = a 2,3-bis-O-(geranylgeranyl)-sn-glycerol 1-phospholipid + 8 AH2. The enzyme catalyses CDP-2,3-bis-O-(geranylgeranyl)-sn-glycerol + 8 AH2 = CDP-2,3-bis-O-(phytanyl)-sn-glycerol + 8 A. It carries out the reaction archaetidylserine + 8 AH2 = 2,3-bis-O-phytanyl-sn-glycero-3-phospho-L-serine + 8 A. The protein operates within membrane lipid metabolism; glycerophospholipid metabolism. Its function is as follows. Is involved in the reduction of 2,3-digeranylgeranylglycerophospholipids (unsaturated archaeols) into 2,3-diphytanylglycerophospholipids (saturated archaeols) in the biosynthesis of archaeal membrane lipids. Catalyzes the formation of archaetidic acid (2,3-di-O-phytanyl-sn-glyceryl phosphate) from 2,3-di-O-geranylgeranylglyceryl phosphate (DGGGP) via the hydrogenation of each double bond of the isoprenoid chains. Is also probably able to reduce double bonds of geranyl groups in CDP-2,3-bis-O-(geranylgeranyl)-sn-glycerol and archaetidylserine, thus acting at various stages in the biosynthesis of archaeal membrane lipids. This Methanothrix thermoacetophila (strain DSM 6194 / JCM 14653 / NBRC 101360 / PT) (Methanosaeta thermophila) protein is Digeranylgeranylglycerophospholipid reductase.